A 1616-amino-acid chain; its full sequence is DNA (cytosine-5)-methyltransferase 1 (1616 aa).

An interaction with DMAP1 region spans residues 1–120; that stretch reads MPARTAPARV…NQARSEARRV (120 aa). Residues 1 to 148 are interaction with DNMT3A; that stretch reads MPARTAPARV…RRSKSDGEAK (148 aa). 2 interaction with the PRC2/EED-EZH2 complex regions span residues 1–336 and 308–606; these read MPAR…TEKK and NPQI…TIRH. One can recognise a DMAP1-binding domain in the interval 16 to 109; the sequence is PAISLPDDVR…NREVNGRLEN (94 aa). Position 70 is an N6,N6-dimethyllysine (K70). The disordered stretch occupies residues 103-349; that stretch reads VNGRLENGNQ…AKTVMNSKTH (247 aa). 2 positions are modified to phosphoserine: S127 and S133. T137 is subject to Phosphothreonine. At S141 the chain carries Phosphoserine. The residue at position 142 (K142) is an N6-methyllysine; by SETD7. Position 143 is a phosphoserine; by PKB/AKT1 (S143). The interaction with DNMT3B stretch occupies residues 149 to 217; the sequence is PEPSPSPRIT…TSRERVARPL (69 aa). S152 and S154 each carry phosphoserine. K160 bears the N6-acetyllysine mark. Residues 163 to 174 form an interaction with PCNA region; it reads RQTTITSHFAKG. At T166 the chain carries Phosphothreonine. 2 positions are modified to N6-acetyllysine: K173 and K188. The Nuclear localization signal motif lies at 177-205; it reads KRKPQEESERAKSDESIKEEDKDQDEKRR. Composition is skewed to basic and acidic residues over residues 179–214, 221–267, and 281–306; these read KPQE…ERVA, EPER…REAR, and KDEK…EPEK. K259 is modified (N6-acetyllysine; alternate). A Glycyl lysine isopeptide (Lys-Gly) (interchain with G-Cter in SUMO2); alternate cross-link involves residue K259. A homodimerization region spans residues 310–502; that stretch reads QISDEKDEDE…PEYAPIFGLM (193 aa). S312 carries the phosphoserine modification. Residues 321–337 are compositionally biased toward basic and acidic residues; the sequence is EEKRRKTTPKEPTEKKM. The interval 331–550 is DNA replication foci-targeting sequence; that stretch reads EPTEKKMARA…NLNRFTEDSL (220 aa). Residues C353 and C356 each contribute to the Zn(2+) site. Position 366 is an N6-acetyllysine (K366). Phosphoserine is present on residues S394 and S398. Residues C414 and H418 each coordinate Zn(2+). Phosphoserine occurs at positions 509 and 549. Residues 646–692 form a CXXC-type zinc finger; the sequence is NAFKRRRCGVCEVCQQPECGKCKACKDMVKFGGSGRSKQACQERRCP. Positions 651-697 are required for activity; the sequence is RRCGVCEVCQQPECGKCKACKDMVKFGGSGRSKQACQERRCPNMAMK. 8 residues coordinate Zn(2+): C653, C656, C659, C664, C667, C670, C686, and C691. Positions 693–754 are autoinhibitory linker; it reads NMAMKEADDD…SYYKKVCIDA (62 aa). Over residues 699-709 the composition is skewed to acidic residues; that stretch reads ADDDEEVDDNI. The segment at 699-729 is disordered; sequence ADDDEEVDDNIPEMPSPKKMHQGKKKKQNKN. S714 carries the post-translational modification Phosphoserine. The segment covering 716–728 has biased composition (basic residues); sequence KKMHQGKKKKQNK. At S732 the chain carries Phosphoserine. K749 carries the post-translational modification N6-acetyllysine. Residues 755-880 form the BAH 1 domain; that stretch reads ETLEVGDCVS…QDYARFESPP (126 aa). S878 carries the phosphoserine modification. Residues K891, K957, K961, K975, and K1054 each carry the N6-acetyllysine modification. One can recognise a BAH 2 domain in the interval 972-1100; that stretch reads HYRKYSDYIK…AKSKSFEDPP (129 aa). The segment at 1095 to 1130 is disordered; it reads SFEDPPNHARSPGNKGKGKGKGKGKPKSQACEPSEP. 5 consecutive repeat copies span residues 1109–1110, 1111–1112, 1113–1114, 1115–1116, and 1117–1118. Positions 1109–1120 are 6 X 2 AA tandem repeats of K-G; the sequence is KGKGKGKGKGKP. Basic residues predominate over residues 1110–1120; that stretch reads GKGKGKGKGKP. K1111, K1113, and K1115 each carry N6-acetyllysine. K1117 is subject to N6-acetyllysine; by EHMT2. 2 positions are modified to N6-acetyllysine: K1119 and K1121. The stretch at 1119-1120 is one 6; approximate repeat; that stretch reads KP. Residues 1121-1616 form an interaction with the PRC2/EED-EZH2 complex region; it reads KSQACEPSEP…KIKEEEAAKD (496 aa). In terms of domain architecture, SAM-dependent MTase C5-type spans 1139–1599; sequence LRTLDVFSGC…LEIKLCMLAK (461 aa). Residues 1139-1616 form a catalytic region; sequence LRTLDVFSGC…KIKEEEAAKD (478 aa). S-adenosyl-L-methionine-binding positions include S1146, 1150–1151, 1168–1169, 1190–1191, and C1191; these read GL, EM, and DC. The active site involves C1226. An N6-acetyllysine mark is found at K1349 and K1415. N1578 and V1580 together coordinate S-adenosyl-L-methionine. A Glycyl lysine isopeptide (Lys-Gly) (interchain with G-Cter in SUMO2) cross-link involves residue K1609.

The protein belongs to the class I-like SAM-binding methyltransferase superfamily. C5-methyltransferase family. Homodimer. Forms a stable complex with E2F1, BB1 and HDAC1. Forms a complex with DMAP1 and HDAC2, with direct interaction. Interacts with the PRC2/EED-EZH2 complex. Probably part of a corepressor complex containing ZNF304, TRIM28, SETDB1 and DNMT1. Interacts with UHRF1; promoting its recruitment to hemimethylated DNA. Interacts with USP7, promoting its deubiquitination. Interacts with PCNA. Interacts with MBD2 and MBD3. Interacts with DNMT3A and DNMT3B. Interacts with UBC9. Interacts with CSNK1D. Interacts with HDAC1. Interacts with BAZ2A/TIP5. Interacts with SIRT7. Interacts with ZNF263; recruited to the SIX3 promoter along with other proteins involved in chromatin modification and transcriptional corepression where it contributes to transcriptional repression. Interacts with L3MBTL3 and DCAF5; the interaction requires DNMT1 methylation at Lys-142 and is necessary to target DNMT1 for ubiquitination by the CRL4-DCAF5 E3 ubiquitin ligase complex and proteasomal degradation. Interacts with PHF20L1; the interaction requires DNMT1 methylation at Lys-142 and protects DNMT1 from ubiquitination and proteasomal degradation. Sumoylated; sumoylation increases activity. In terms of processing, acetylation on multiple lysines, mainly by KAT2B/PCAF, regulates cell cycle G(2)/M transition. Deacetylation of Lys-1349 and Lys-1415 by SIRT1 increases methyltransferase activity. Post-translationally, phosphorylation of Ser-154 by CDKs is important for enzymatic activity and protein stability. Phosphorylation of Ser-143 by AKT1 prevents methylation by SETD7 thereby increasing DNMT1 stability. Methylation at Lys-142 by SETD7 is necessary for the regulation of DNMT1 proteasomal degradation. In terms of processing, ubiquitinated by UHRF1; interaction with USP7 counteracts ubiquitination by UHRF1 by promoting deubiquitination and preventing degradation by the proteasome. Ubiquitous; highly expressed in fetal tissues, heart, kidney, placenta, peripheral blood mononuclear cells, and expressed at lower levels in spleen, lung, brain, small intestine, colon, liver, and skeletal muscle. Isoform 2 is less expressed than isoform 1.

It is found in the nucleus. It carries out the reaction a 2'-deoxycytidine in DNA + S-adenosyl-L-methionine = a 5-methyl-2'-deoxycytidine in DNA + S-adenosyl-L-homocysteine + H(+). In terms of biological role, methylates CpG residues. Preferentially methylates hemimethylated DNA. Associates with DNA replication sites in S phase maintaining the methylation pattern in the newly synthesized strand, that is essential for epigenetic inheritance. Associates with chromatin during G2 and M phases to maintain DNA methylation independently of replication. It is responsible for maintaining methylation patterns established in development. DNA methylation is coordinated with methylation of histones. Mediates transcriptional repression by direct binding to HDAC2. In association with DNMT3B and via the recruitment of CTCFL/BORIS, involved in activation of BAG1 gene expression by modulating dimethylation of promoter histone H3 at H3K4 and H3K9. Probably forms a corepressor complex required for activated KRAS-mediated promoter hypermethylation and transcriptional silencing of tumor suppressor genes (TSGs) or other tumor-related genes in colorectal cancer (CRC) cells. Also required to maintain a transcriptionally repressive state of genes in undifferentiated embryonic stem cells (ESCs). Associates at promoter regions of tumor suppressor genes (TSGs) leading to their gene silencing. Promotes tumor growth. The sequence is that of DNA (cytosine-5)-methyltransferase 1 (DNMT1) from Homo sapiens (Human).